The following is a 117-amino-acid chain: Immunoglobulin kappa variable 1-33 (117 aa).

The signal sequence occupies residues 1–22 (MDMRVPAQLLGLLLLWLSGARC). The segment at 23-45 (DIQMTQSPSSLSASVGDRVTITC) is framework-1. The 94-residue stretch at 24–117 (IQMTQSPSSL…YYCQQYDNLP (94 aa)) folds into the Ig-like domain. Cysteines 45 and 110 form a disulfide. The segment at 46-56 (QASQDISNYLN) is complementarity-determining-1. A framework-2 region spans residues 57-71 (WYQQKPGKAPKLLIY). A complementarity-determining-2 region spans residues 72–78 (DASNLET). The tract at residues 79-110 (GVPSRFSGSGSGTDFTFTISSLQPEDIATYYC) is framework-3. A complementarity-determining-3 region spans residues 111–117 (QQYDNLP).

In terms of assembly, immunoglobulins are composed of two identical heavy chains and two identical light chains; disulfide-linked.

The protein resides in the secreted. Its subcellular location is the cell membrane. Functionally, v region of the variable domain of immunoglobulin light chains that participates in the antigen recognition. Immunoglobulins, also known as antibodies, are membrane-bound or secreted glycoproteins produced by B lymphocytes. In the recognition phase of humoral immunity, the membrane-bound immunoglobulins serve as receptors which, upon binding of a specific antigen, trigger the clonal expansion and differentiation of B lymphocytes into immunoglobulins-secreting plasma cells. Secreted immunoglobulins mediate the effector phase of humoral immunity, which results in the elimination of bound antigens. The antigen binding site is formed by the variable domain of one heavy chain, together with that of its associated light chain. Thus, each immunoglobulin has two antigen binding sites with remarkable affinity for a particular antigen. The variable domains are assembled by a process called V-(D)-J rearrangement and can then be subjected to somatic hypermutations which, after exposure to antigen and selection, allow affinity maturation for a particular antigen. This is Immunoglobulin kappa variable 1-33 from Homo sapiens (Human).